The chain runs to 512 residues: Ferrochelatase-2, chloroplastic (512 aa).

Residues 1–32 (MNCPAMTASPSSSSSSSYSTFRPPPPLLPQLS) are disordered. A chloroplast-targeting transit peptide spans 1-83 (MNCPAMTASP…SNPLNISSSS (83 aa)). The segment covering 9–21 (SPSSSSSSSYSTF) has biased composition (low complexity). Valine 84 carries the N-acetylvaline modification.

Belongs to the ferrochelatase family. As to expression, expressed in leaves and flowers.

The protein localises to the plastid. The protein resides in the chloroplast membrane. It is found in the chloroplast thylakoid membrane. It catalyses the reaction heme b + 2 H(+) = protoporphyrin IX + Fe(2+). It functions in the pathway porphyrin-containing compound metabolism; protoheme biosynthesis; protoheme from protoporphyrin-IX: step 1/1. Catalyzes the last step of heme biosynthesis by inserting ferrous iron into protoporphyrin IX to produce protoheme. Produces heme for photosynthetic cytochromes, and for proteins involved in abiotic and biotic stress responses. May play a role in the quality control of individual chloroplasts during photo-oxidative stress through regulation of heme biosynthesis. In Arabidopsis thaliana (Mouse-ear cress), this protein is Ferrochelatase-2, chloroplastic.